Reading from the N-terminus, the 757-residue chain is Inhibitor of nuclear factor kappa-B kinase subunit beta (757 aa).

A Protein kinase domain is found at 15 to 300 (WEMKERLGTG…DPQYGPNGCF (286 aa)). ATP-binding positions include 21 to 29 (LGTGGFGNV) and K44. D145 acts as the Proton acceptor in catalysis. A Glycyl lysine isopeptide (Lys-Gly) (interchain with G-Cter in ubiquitin) cross-link involves residue K163. S177 is subject to Phosphoserine; by TBK1 and PKC/PRKCZ. C179 is subject to S-nitrosocysteine. Residue S181 is modified to Phosphoserine; by TBK1, PKC/PRKCZ and PDPK1. The residue at position 191 (P191) is a Hydroxyproline. Positions 458 to 479 (LLRNNSCLSKMKNAMASTAQQL) are leucine-zipper. At S670 the chain carries Phosphoserine; by autocatalysis. Residue S672 is modified to Phosphoserine. Residues S675, S682, S689, S692, S697, S705, S733, and S740 each carry the phosphoserine; by autocatalysis modification. A disordered region spans residues 682 to 703 (SHPGHLMSQPSSACDSLPDSDK). The NEMO-binding stretch occupies residues 737 to 742 (LDWSWL).

The protein belongs to the protein kinase superfamily. Ser/Thr protein kinase family. I-kappa-B kinase subfamily. In terms of assembly, component of the I-kappa-B-kinase (IKK) core complex consisting of CHUK, IKBKB and IKBKG; probably four alpha/CHUK-beta/IKBKB dimers are associated with four gamma/IKBKG subunits. The IKK core complex seems to associate with regulatory or adapter proteins to form a IKK-signalosome holo-complex. The IKK complex associates with TERF2IP/RAP1, leading to promote IKK-mediated phosphorylation of RELA/p65. Part of a complex composed of NCOA2, NCOA3, CHUK/IKKA, IKBKB, IKBKG and CREBBP. Part of a 70-90 kDa complex at least consisting of CHUK/IKKA, IKBKB, NFKBIA, RELA, ELP1 and MAP3K14. Found in a membrane raft complex, at least composed of BCL10, CARD11, DPP4 and IKBKB. Interacts with SQSTM1 through PRKCZ or PRKCI. Forms an NGF-induced complex with IKBKB, PRKCI and TRAF6. May interact with MAVS/IPS1. Interacts with NALP2. Interacts with TICAM1. Interacts with FAF1; the interaction disrupts the IKK complex formation. Interacts with ATM. Part of a ternary complex consisting of TANK, IKBKB and IKBKG. Interacts with NIBP; the interaction is direct. Interacts with ARRB1 and ARRB2. Interacts with TRIM21. Interacts with NLRC5; prevents IKBKB phosphorylation and kinase activity. Interacts with PDPK1. Interacts with EIF2AK2/PKR. The phosphorylated form interacts with PPM1A and PPM1B. Interacts with ZNF268 isoform 2; the interaction is further increased in a TNF-alpha-dependent manner. Interacts with IKBKE. Interacts with ZC3H12A. Interacts with AKAP13. Interacts with LRRC14; disrupts IKBKB-IKBKG interaction preventing I-kappa-B-kinase (IKK) core complex formation and leading to a decrease of IKBKB phosphorylation and NF-kappaB activation. Interacts with SASH1. Interacts with ARFIP2. Interacts with FKBP5. Post-translationally, upon cytokine stimulation, phosphorylated on Ser-177 and Ser-181 by MEKK1 and/or MAP3K14/NIK as well as TBK1 and PRKCZ; which enhances activity. Phosphorylated by MAP3K7/TAK1 in response to NOD1 and NOD2 signaling, promoting activation and phosphorylation of NF-kappa-B inhibitors, leading to NF-kappa-B activation. Once activated, autophosphorylates on the C-terminal serine cluster; which decreases activity and prevents prolonged activation of the inflammatory response. Phosphorylated by the IKK-related kinases TBK1 and IKBKE, which is associated with reduced CHUK/IKKA and IKBKB activity and NF-kappa-B-dependent gene transcription. Dephosphorylated at Ser-177 and Ser-181 by PPM1A and PPM1B. Ubiquitinated. Monoubiquitination involves TRIM21 that leads to inhibition of Tax-induced NF-kappa-B signaling. 'Ser-163' may not serve as a monoubiquitination site. Ubiquitination on 'Ser-163' may modulate phosphorylation on C-terminal serine residues. In terms of processing, hydroxylated by PHD1/EGLN2, loss of hydroxylation under hypoxic conditions results in activation of NF-kappa-B.

It localises to the cytoplasm. The protein localises to the nucleus. The protein resides in the membrane raft. It carries out the reaction L-seryl-[I-kappa-B protein] + ATP = O-phospho-L-seryl-[I-kappa-B protein] + ADP + H(+). The enzyme catalyses L-seryl-[protein] + ATP = O-phospho-L-seryl-[protein] + ADP + H(+). It catalyses the reaction L-threonyl-[protein] + ATP = O-phospho-L-threonyl-[protein] + ADP + H(+). Functionally, serine kinase that plays an essential role in the NF-kappa-B signaling pathway which is activated by multiple stimuli such as inflammatory cytokines, bacterial or viral products, DNA damages or other cellular stresses. Acts as a part of the canonical IKK complex in the conventional pathway of NF-kappa-B activation. Phosphorylates inhibitors of NF-kappa-B on 2 critical serine residues. These modifications allow polyubiquitination of the inhibitors and subsequent degradation by the proteasome. In turn, free NF-kappa-B is translocated into the nucleus and activates the transcription of hundreds of genes involved in immune response, growth control, or protection against apoptosis. In addition to the NF-kappa-B inhibitors, phosphorylates several other components of the signaling pathway including NEMO/IKBKG, NF-kappa-B subunits RELA and NFKB1, as well as IKK-related kinases TBK1 and IKBKE. IKK-related kinase phosphorylations may prevent the overproduction of inflammatory mediators since they exert a negative regulation on canonical IKKs. Phosphorylates FOXO3, mediating the TNF-dependent inactivation of this pro-apoptotic transcription factor. Also phosphorylates other substrates including NAA10, NCOA3, BCL10 and IRS1. Phosphorylates RIPK1 at 'Ser-25' which represses its kinase activity and consequently prevents TNF-mediated RIPK1-dependent cell death. Phosphorylates the C-terminus of IRF5, stimulating IRF5 homodimerization and translocation into the nucleus. This chain is Inhibitor of nuclear factor kappa-B kinase subunit beta (Ikbkb), found in Rattus norvegicus (Rat).